The chain runs to 699 residues: MLKFREWSKEFFGRKLTIQYGKVAKQSSGAAWVQFGDSVVLATANISDRVIEGVDFVPLTVEYQEKFYAAGKIPGGFIKREGKPTESAILSARLIDRPIRPLFPKYLRNDVQLIVTVLSVDGDTPPDVTGIFAASLALNFSKIPFQGIVAGVRIGYVDGEFVIFPTEEQLKNSKLDIVVAGSKDAITMVEGEAKEVTEEEMVQALMVAHEAIKKLIEFEEEILREFNVEKMEIEEPKPKDELIGRFEELLVENELRKRLLIKEKLERSLKLKEYKEELISKIFEEFEIDDEEKLTQEMLLKELFDEKAKKLMRKIIINEGIRADGRTPEEIRPITCEVGVLPRTHGSALFTRGETQSLGIVTLGAPMEEQIVDTIMEEGTKRFILHYNFPPFSVGEVKPLRGPGRREIGHGHLAERALKAVAPDEEDFPYVVRVVSEILESNGSSSMATVCSGSLALMDAGVPIKTHVAGVAMGLIVDEENEVVLTDIQGLEDHWGDMDFKVAGTRNGITAFQMDCKIAGVGEELLKKALKQARVARMRILDIMFETIKEPRKSLSPYAPLIANIEIDPMKVGELIGPGGKVIKSIVKEFDVEISIDDVTGKVSVYGKDQNKVNQAIEYIKTLTREIEVGDMFEGKITRIEPYGLFVELMPGKIGLAHSSKLGNDSKEFRKKYKVGDVIKVVVVNIDDSGRIQLGKAEE.

Mg(2+) is bound by residues Asp493 and Asp499. In terms of domain architecture, KH spans 560–620 (PLIANIEIDP…NKVNQAIEYI (61 aa)). In terms of domain architecture, S1 motif spans 630 to 697 (GDMFEGKITR…DSGRIQLGKA (68 aa)).

Belongs to the polyribonucleotide nucleotidyltransferase family. Mg(2+) is required as a cofactor.

The protein localises to the cytoplasm. It catalyses the reaction RNA(n+1) + phosphate = RNA(n) + a ribonucleoside 5'-diphosphate. Functionally, involved in mRNA degradation. Catalyzes the phosphorolysis of single-stranded polyribonucleotides processively in the 3'- to 5'-direction. This Thermosipho melanesiensis (strain DSM 12029 / CIP 104789 / BI429) protein is Polyribonucleotide nucleotidyltransferase.